An 867-amino-acid polypeptide reads, in one-letter code: Xylosyltransferase 2 (867 aa).

Over 1-15 (MVASARVQKLVRRYK) the chain is Cytoplasmic. A helical; Signal-anchor for type II membrane protein transmembrane segment spans residues 16-36 (LAIATALAILLLQGLVVWSFS). The Lumenal portion of the chain corresponds to 37–867 (VLEDDEPGEK…GPVKADGRLR (831 aa)). Residues 41 to 122 (DEPGEKGRQK…PPPEAPGRQN (82 aa)) are disordered. A compositionally biased stretch (basic and acidic residues) spans 53 to 65 (RPLDPSEGSKDTD). A compositionally biased stretch (basic residues) spans 73-82 (SAGRRHGRWR). N122 is a glycosylation site (N-linked (GlcNAc...) asparagine). 2 cysteine pairs are disulfide-bonded: C161–C189 and C205–C447. Residues V238, D266, and 295 to 297 (TIW) contribute to the UDP-alpha-D-xylose site. An N-linked (GlcNAc...) asparagine glycan is attached at N326. UDP-alpha-D-xylose-binding positions include 399 to 400 (DW), S480, and 503 to 504 (RK). Cystine bridges form between C580–C835 and C828–C841. N-linked (GlcNAc...) asparagine glycosylation is present at N685.

It belongs to the glycosyltransferase 14 family. XylT subfamily. In terms of assembly, monomer. It depends on Mg(2+) as a cofactor. Mn(2+) is required as a cofactor. Post-translationally, contains disulfide bonds.

It localises to the golgi apparatus membrane. It is found in the secreted. It carries out the reaction UDP-alpha-D-xylose + L-seryl-[protein] = 3-O-(beta-D-xylosyl)-L-seryl-[protein] + UDP + H(+). It participates in glycan metabolism; chondroitin sulfate biosynthesis. The protein operates within glycan metabolism; heparan sulfate biosynthesis. Its function is as follows. Catalyzes the first step in the biosynthesis of chondroitin sulfate, heparan sulfate and dermatan sulfate proteoglycans, such as DCN. Transfers D-xylose from UDP-D-xylose to specific serine residues of the core protein. The polypeptide is Xylosyltransferase 2 (XYLT2) (Bos taurus (Bovine)).